The chain runs to 479 residues: Ribulose bisphosphate carboxylase large chain (479 aa).

Residues 1–2 (MS) constitute a propeptide that is removed on maturation. 2 residues coordinate substrate: N123 and T173. The active-site Proton acceptor is K175. Residue K177 coordinates substrate. 3 residues coordinate Mg(2+): K201, D203, and E204. At K201 the chain carries N6-carboxylysine. Phosphoserine is present on S208. Catalysis depends on H294, which acts as the Proton acceptor. Substrate-binding residues include R295 and H327. Position 330 is a phosphothreonine (T330). S379 contacts substrate.

Belongs to the RuBisCO large chain family. Type I subfamily. As to quaternary structure, heterohexadecamer of 8 large chains and 8 small chains; disulfide-linked. The disulfide link is formed within the large subunit homodimers. Mg(2+) serves as cofactor. Post-translationally, the disulfide bond which can form in the large chain dimeric partners within the hexadecamer appears to be associated with oxidative stress and protein turnover.

It localises to the plastid. Its subcellular location is the chloroplast. It carries out the reaction 2 (2R)-3-phosphoglycerate + 2 H(+) = D-ribulose 1,5-bisphosphate + CO2 + H2O. It catalyses the reaction D-ribulose 1,5-bisphosphate + O2 = 2-phosphoglycolate + (2R)-3-phosphoglycerate + 2 H(+). RuBisCO catalyzes two reactions: the carboxylation of D-ribulose 1,5-bisphosphate, the primary event in carbon dioxide fixation, as well as the oxidative fragmentation of the pentose substrate in the photorespiration process. Both reactions occur simultaneously and in competition at the same active site. This Lobularia maritima (Sweet alyssum) protein is Ribulose bisphosphate carboxylase large chain.